A 370-amino-acid polypeptide reads, in one-letter code: Dual-specificity RNA methyltransferase RlmN (370 aa).

The active-site Proton acceptor is Glu-97. A Radical SAM core domain is found at 103–340; that stretch reads EKSRGTLCIS…CTVRRTRGDD (238 aa). Cys-110 and Cys-345 form a disulfide bridge. [4Fe-4S] cluster-binding residues include Cys-117, Cys-121, and Cys-124. S-adenosyl-L-methionine contacts are provided by residues 170–171, Ser-202, 224–226, and Asn-302; these read GE and SLH. The active-site S-methylcysteine intermediate is Cys-345.

It belongs to the radical SAM superfamily. RlmN family. It depends on [4Fe-4S] cluster as a cofactor.

It localises to the cytoplasm. It carries out the reaction adenosine(2503) in 23S rRNA + 2 reduced [2Fe-2S]-[ferredoxin] + 2 S-adenosyl-L-methionine = 2-methyladenosine(2503) in 23S rRNA + 5'-deoxyadenosine + L-methionine + 2 oxidized [2Fe-2S]-[ferredoxin] + S-adenosyl-L-homocysteine. It catalyses the reaction adenosine(37) in tRNA + 2 reduced [2Fe-2S]-[ferredoxin] + 2 S-adenosyl-L-methionine = 2-methyladenosine(37) in tRNA + 5'-deoxyadenosine + L-methionine + 2 oxidized [2Fe-2S]-[ferredoxin] + S-adenosyl-L-homocysteine. In terms of biological role, specifically methylates position 2 of adenine 2503 in 23S rRNA and position 2 of adenine 37 in tRNAs. m2A2503 modification seems to play a crucial role in the proofreading step occurring at the peptidyl transferase center and thus would serve to optimize ribosomal fidelity. The protein is Dual-specificity RNA methyltransferase RlmN of Hydrogenovibrio crunogenus (strain DSM 25203 / XCL-2) (Thiomicrospira crunogena).